The primary structure comprises 688 residues: ATP-dependent RNA helicase ded1 (688 aa).

Composition is skewed to polar residues over residues 1–15 (MADQ…LSID) and 55–67 (GLNN…NNNY). Positions 1–170 (MADQLSSGMG…TPDDPSKQHT (170 aa)) are disordered. Over residues 88–102 (GFEGQQGAGWGGPRP) the composition is skewed to gly residues. The segment covering 103–114 (QGGFNPNAYRGN) has biased composition (low complexity). Residues 115–129 (AGAGAGAGAGGGGGS) are compositionally biased toward gly residues. The short motif at 194–222 (LTFSNPPLDNHLISNIQLARYNVPTPVQK) is the Q motif element. In terms of domain architecture, Helicase ATP-binding spans 225 to 416 (IPIVMGGRDL…RDFLKDYIFL (192 aa)). Residue 238-245 (AQTGSGKT) coordinates ATP. Positions 360–363 (DEAD) match the DEAD box motif. The Helicase C-terminal domain maps to 427–587 (NITQKVEYVE…EVPAFLETIA (161 aa)). The interval 590–615 (SSFGGGRGGRGGGRGGGRGRTQTADY) is disordered. Over residues 592–608 (FGGGRGGRGGGRGGGRG) the composition is skewed to gly residues.

Belongs to the DEAD box helicase family. DDX3/DED1 subfamily.

The protein localises to the cytoplasm. The enzyme catalyses ATP + H2O = ADP + phosphate + H(+). Functionally, ATP-binding RNA helicase involved in translation initiation. Remodels RNA in response to ADP and ATP concentrations by facilitating disruption, but also formation of RNA duplexes. This Neurospora crassa (strain ATCC 24698 / 74-OR23-1A / CBS 708.71 / DSM 1257 / FGSC 987) protein is ATP-dependent RNA helicase ded1 (drh-9).